A 305-amino-acid polypeptide reads, in one-letter code: LysM and putative peptidoglycan-binding domain-containing protein 3 (305 aa).

The Extracellular portion of the chain corresponds to 1–221 (MTGRNQHNGF…PYYGADWGMR (221 aa)). N29 carries N-linked (GlcNAc...) asparagine glycosylation. Residues 31 to 60 (SETEYSEEDGEAFELRSRGRERHHRSTSRD) are disordered. Residues 68–112 (LIREIKEGDTLISISLQYFCTVADIKRANNLLTEQDFFALRSLRI) enclose the LysM domain. Polar residues predominate over residues 121-144 (TETHNTAPHKSSSPSGTCRITETP). A disordered region spans residues 121 to 156 (TETHNTAPHKSSSPSGTCRITETPVSGASLDSTSSS). A compositionally biased stretch (low complexity) spans 146-156 (SGASLDSTSSS). The helical transmembrane segment at 222 to 242 (WWTAVAIMLVVGIVTPVFYLL) threads the bilayer. Residues 243-305 (YYEVLMKADV…QHHVKHQEET (63 aa)) are Cytoplasmic-facing.

It localises to the cell membrane. It is found in the golgi apparatus. Its function is as follows. Essential for Golgi structural integrity. The polypeptide is LysM and putative peptidoglycan-binding domain-containing protein 3 (lysmd3) (Danio rerio (Zebrafish)).